The chain runs to 347 residues: MNPLAQPIIYLTVFTGTLITALSSHWFFAWLGLEMNMLAFIPVLTKKTSPRSTEAAIKYFLTQATASMIFLMAILHNNMFSGQWTTANTTNPYSSLMIVTALAMKLGMAPFHFWVPEVTQGVPLTSGLLLLTWQKLAPISIMYQMYPSVDTNILLTLSILSILVGSWGGLNQTQLHKILAYSSITHMGWMVAVLPYNPNITILNLIIYITLTTTTFLILDLNSSTTILLLSRTWNKLTWLMPLISSTLLSLGGLPPLTGFLPKWAIIEEFAKNDNLIAPTIMAIISLLNLYFYARLIYITSITLLPMSNNVKMKWQFENTKPAPLLPTLTILTALLLPISPLILSIP.

The next 10 helical transmembrane spans lie at Val-13–Leu-33, Ala-55–Leu-75, Leu-96–Pro-116, Val-122–Met-142, Thr-151–Asn-171, Ile-178–Pro-198, Asn-199–Leu-219, Leu-237–Leu-257, Ile-277–Ile-297, and Leu-326–Ile-346.

It belongs to the complex I subunit 2 family. In terms of assembly, core subunit of respiratory chain NADH dehydrogenase (Complex I) which is composed of 45 different subunits. Interacts with TMEM242.

The protein resides in the mitochondrion inner membrane. It carries out the reaction a ubiquinone + NADH + 5 H(+)(in) = a ubiquinol + NAD(+) + 4 H(+)(out). In terms of biological role, core subunit of the mitochondrial membrane respiratory chain NADH dehydrogenase (Complex I) which catalyzes electron transfer from NADH through the respiratory chain, using ubiquinone as an electron acceptor. Essential for the catalytic activity and assembly of complex I. The protein is NADH-ubiquinone oxidoreductase chain 2 of Pongo pygmaeus (Bornean orangutan).